A 475-amino-acid chain; its full sequence is MADMQNLVERLERAVGRLEAVSHTSDMHRGYADSPSKAGAAPYVQAFDSLLAGPVAEYLKISKEIGGDVQKHAEMVHTGLKLERALLVTASQCQQPAENKLSDLLAPISEQIKEVITFREKNRGSKLFNHLSAVSESIQALGWVAMAPKPGPYVKEMNDAAMFYTNRVLKEYKDVDKKHVDWVKAYLSIWTELQAYIKEFHTTGLAWSKTGPVAKELSGLPSGPSAGSCPPPPPPCPPPPPVSTISCSYESASRSSLFAQINQGESITHALKHVSDDMKTHKNPALKAQSGPVRSGPKPFSAPKPQTSPSPKRATKKEPAVLELEGKKWRVENQENVSNLVIEDTELKQVAYIYKCVNTTLQIKGKINSITVDNCKKLGLVFDDVVGIVEIINSKDVKVQVMGKVPTISINKTDGCHAYLSKNSLDCEIVSAKSSEMNVLIPTEGGDFNEFPVPEQFKTLWNGQKLVTTVTEIAG.

The residue at position 2 (alanine 2) is an N-acetylalanine. Tyrosine 31 bears the Phosphotyrosine mark. Serine 34 carries the phosphoserine modification. N6-acetyllysine is present on lysine 81. 2 disordered regions span residues 216-237 and 278-319; these read ELSG…PPCP and MKTH…KKEP. A compositionally biased stretch (low complexity) spans 218-228; the sequence is SGLPSGPSAGS. The residue at position 287 (lysine 287) is an N6-methyllysine. Serine 290, serine 295, and serine 301 each carry phosphoserine. Threonine 307 carries the phosphothreonine modification. Phosphoserine occurs at positions 308 and 310. The region spanning 319–453 is the C-CAP/cofactor C-like domain; that stretch reads PAVLELEGKK…EGGDFNEFPV (135 aa). Lysine 348 participates in a covalent cross-link: Glycyl lysine isopeptide (Lys-Gly) (interchain with G-Cter in SUMO1).

Belongs to the CAP family. In terms of assembly, homodimer. Binds actin monomers.

The protein resides in the cell membrane. In terms of biological role, directly regulates filament dynamics and has been implicated in a number of complex developmental and morphological processes, including mRNA localization and the establishment of cell polarity. The sequence is that of Adenylyl cyclase-associated protein 1 (CAP1) from Homo sapiens (Human).